The following is a 326-amino-acid chain: Ig gamma-1 chain C region (326 aa).

Residues alanine 1–isoleucine 97 are CH1. Cysteine 27 and cysteine 82 form a disulfide bridge. The interval valine 98 to threonine 112 is hinge. Residues glycine 113–glutamate 219 form a CH2 region. 2 cysteine pairs are disulfide-bonded: cysteine 140-cysteine 200 and cysteine 246-cysteine 304. Asparagine 176 carries N-linked (GlcNAc...) asparagine glycosylation. The tract at residues glycine 220–lysine 326 is CH3.

The polypeptide is Ig gamma-1 chain C region (Rattus norvegicus (Rat)).